The chain runs to 589 residues: Serine/threonine-protein phosphatase 2A 65 kDa regulatory subunit A alpha isoform (589 aa).

N-acetylalanine is present on Ala-2. HEAT repeat units follow at residues 8 to 46 (DSLYPIAVLIDELRNEDVQLRLNSIKKLSTIALALGVER), 47 to 84 (TRSELLPFLTDTIYDEDEVLLALAEQLGTFTTLVGGPE), 85 to 123 (YVHCLLPPLESLATVEETVVRDKAVESLRAISHEHSPSD), 124 to 161 (LEAHFVPLVKRLAGGDWFTSRTSACGLFSVCYPRVSSA), 162 to 200 (VKAELRQYFRNLCSDDTPMVRRAAASKLGEFAKVLELDN), 201 to 239 (VKSEIIPMFSNLASDEQDSVRLLAVEACVNIAQLLPQED), 240 to 278 (LEALVMPTLRQAAEDKSWRVRYMVADKFTELHKAVGPEI), 279 to 321 (TKTD…RENV), 322 to 360 (IMTQILPCIKELVSDANQHVKSALASVIMGLSPILGKDS), 361 to 399 (TIEHLLPLFLAQLKDECPEVRLNIISNLDCVNEVIGIRQ), 400 to 438 (LSQSLLPAIVELAEDAKWRVRLAIIEYMPLLAGQLGVEF), 439 to 477 (FDEKLNSLCMAWLVDHVYAIREAATSNLKKLVEKFGKEW), 478 to 516 (AHATIIPKVLAMSGDPNYLHRMTTLFCINVLSEVCGQDI), 517 to 555 (TTKHMLPTVLRMAGDPVANVRFNVAKSLQKIGPILDNST), and 556 to 589 (LQSEVKPVLEKLTQDQDVDVKYFAQEALTVLSLA). Residues 8–399 (DSLYPIAVLI…CVNEVIGIRQ (392 aa)) are PP2A subunit B binding. Positions 47-321 (TRSELLPFLT…NLSADCRENV (275 aa)) are polyoma small and medium T antigens Binding. The SV40 small T antigen binding stretch occupies residues 85 to 239 (YVHCLLPPLE…NIAQLLPQED (155 aa)). Lys-280 carries the N6-acetyllysine modification. Residues 400–589 (LSQSLLPAIV…QEALTVLSLA (190 aa)) form a PP2A subunit C binding region.

The protein belongs to the phosphatase 2A regulatory subunit A family. As to quaternary structure, PP2A consists of a common heterodimeric core enzyme, composed of PPP2CA a 36 kDa catalytic subunit (subunit C) and PPP2R1A a 65 kDa constant regulatory subunit (PR65 or subunit A), that associates with a variety of regulatory subunits. Proteins that associate with the core dimer include three families of regulatory subunits B (the R2/B/PR55/B55, R3/B''/PR72/PR130/PR59 and R5/B'/B56 families), the 48 kDa variable regulatory subunit, viral proteins, and cell signaling molecules. Found in a complex with at least ARL2, PPP2CB, PPP2R1A, PPP2R2A, PPP2R5E and TBCD. Interacts with the PP2A C catalytic subunit PPP2CA. Interacts with the PP2A B subunit PPP2R2A. Interacts with the PP2A B subunit PPP2R5D. Interacts with FOXO1; the interaction dephosphorylates FOXO1 on AKT-mediated phosphorylation sites. Interacts with IPO9. Interacts with TP53 and SGO1. Interacts with PLA2G16; this interaction might decrease PP2A activity. Interacts with CTTNBP2NL. Interacts with GNA12; the interaction promotes protein phosphatase 2A activation causing dephosphorylation of MAPT. Interacts with CIP2A; this interaction stabilizes CIP2A. Interacts with PABIR1/FAM122A. Interacts with ADCY8; antagonizes interaction between ADCY8 and calmodulin. Interacts with CRTC3 (when phosphorylated at 'Ser-391'). Interacts with SPRY2. Part of the core of STRIPAK complexes composed of PP2A catalytic and scaffolding subunits, the striatins (PP2A regulatory subunits), the striatin-associated proteins MOB4, STRIP1 and STRIP2, PDCD10 and members of the STE20 kinases, such as STK24 and STK26. Component of the Integrator-PP2A (INTAC) complex, composed of the Integrator core complex and protein phosphatase 2A subunits PPP2CA and PPP2R1A.

It localises to the cytoplasm. It is found in the nucleus. The protein localises to the chromosome. The protein resides in the centromere. Its subcellular location is the lateral cell membrane. It localises to the cell projection. It is found in the dendrite. Its function is as follows. The PR65 subunit of protein phosphatase 2A serves as a scaffolding molecule to coordinate the assembly of the catalytic subunit and a variable regulatory B subunit. Upon interaction with GNA12 promotes dephosphorylation of microtubule associated protein TAU/MAPT. Required for proper chromosome segregation and for centromeric localization of SGO1 in mitosis. Together with RACK1 adapter, mediates dephosphorylation of AKT1 at 'Ser-473', preventing AKT1 activation and AKT-mTOR signaling pathway. Dephosphorylation of AKT1 is essential for regulatory T-cells (Treg) homeostasis and stability. Part of the striatin-interacting phosphatase and kinase (STRIPAK) complexes. STRIPAK complexes have critical roles in protein (de)phosphorylation and are regulators of multiple signaling pathways including Hippo, MAPK, nuclear receptor and cytoskeleton remodeling. Different types of STRIPAK complexes are involved in a variety of biological processes such as cell growth, differentiation, apoptosis, metabolism and immune regulation. Key mediator of a quality checkpoint during transcription elongation as part of the Integrator-PP2A (INTAC) complex. The INTAC complex drives premature transcription termination of transcripts that are unfavorably configured for transcriptional elongation: within the INTAC complex, acts as a scaffolding subunit for PPP2CA, which catalyzes dephosphorylation of the C-terminal domain (CTD) of Pol II subunit POLR2A/RPB1 and SUPT5H/SPT5, thereby preventing transcriptional elongation. Regulates the recruitment of the SKA complex to kinetochores. The chain is Serine/threonine-protein phosphatase 2A 65 kDa regulatory subunit A alpha isoform (PPP2R1A) from Bos taurus (Bovine).